Here is a 318-residue protein sequence, read N- to C-terminus: Methionyl-tRNA formyltransferase (318 aa).

110 to 113 (SLLP) is a binding site for (6S)-5,6,7,8-tetrahydrofolate.

Belongs to the Fmt family.

The enzyme catalyses L-methionyl-tRNA(fMet) + (6R)-10-formyltetrahydrofolate = N-formyl-L-methionyl-tRNA(fMet) + (6S)-5,6,7,8-tetrahydrofolate + H(+). Functionally, attaches a formyl group to the free amino group of methionyl-tRNA(fMet). The formyl group appears to play a dual role in the initiator identity of N-formylmethionyl-tRNA by promoting its recognition by IF2 and preventing the misappropriation of this tRNA by the elongation apparatus. This chain is Methionyl-tRNA formyltransferase, found in Latilactobacillus sakei subsp. sakei (strain 23K) (Lactobacillus sakei subsp. sakei).